The following is a 335-amino-acid chain: tRNA-splicing endonuclease (335 aa).

Residues Tyr269, His280, and Lys311 contribute to the active site.

Belongs to the tRNA-intron endonuclease family. Archaeal long subfamily. In terms of assembly, homodimer.

The catalysed reaction is pretRNA = a 3'-half-tRNA molecule with a 5'-OH end + a 5'-half-tRNA molecule with a 2',3'-cyclic phosphate end + an intron with a 2',3'-cyclic phosphate and a 5'-hydroxyl terminus.. Functionally, endonuclease that removes tRNA introns. Cleaves pre-tRNA at the 5'- and 3'-splice sites to release the intron. The products are an intron and two tRNA half-molecules bearing 2',3' cyclic phosphate and 5'-OH termini. Recognizes a pseudosymmetric substrate in which 2 bulged loops of 3 bases are separated by a stem of 4 bp. This is tRNA-splicing endonuclease from Haloarcula marismortui (strain ATCC 43049 / DSM 3752 / JCM 8966 / VKM B-1809) (Halobacterium marismortui).